We begin with the raw amino-acid sequence, 234 residues long: Small ribosomal subunit protein uS3 (234 aa).

One can recognise a KH type-2 domain in the interval 17–86 (VEKFLTKELK…SPQVEVQQVQ (70 aa)).

It belongs to the universal ribosomal protein uS3 family. Part of the 30S ribosomal subunit.

In terms of biological role, binds the lower part of the 30S subunit head. This is Small ribosomal subunit protein uS3 from Methanoculleus marisnigri (strain ATCC 35101 / DSM 1498 / JR1).